Consider the following 404-residue polypeptide: MQIGQRLGTPLSPSATRVMLLGAGELGKEVIIALQRLGVEVVAVDRYPDAPGHQVAHRAHVIDMTDPAALRAIVEAERPHLIVPEIEAIATDALAAIEAAGLAEVIPTARATQLTMNREGIRRLAAEELGLPTSPYAFADSFEAFSAAVAKIGMPCVVKPVMSSSGKGQSVVKTDADVKPAWDYAMAGGRVNHGRVIVEGFVDFDYEITQLTVRAIDPATLDTRTYFCEPVGHVQVAGDYVESWQPQPMSAVALEKSREIAHKVTEALGGRGLFGVELFVRGDDVWFSEVSPRPHDTGLVTLASQRQSEFELHARAILGLPVDPALGTPAASAVIYGGLDERGIAFEGVRDALAVPGADLRLFGKPESFAKRRMGVALATGATVDEARERAKRAAAAVRPVSAR.

N(1)-(5-phospho-beta-D-ribosyl)glycinamide-binding positions include glutamate 25–leucine 26 and glutamate 85. ATP contacts are provided by residues arginine 118, lysine 159, serine 164 to glutamine 169, glutamate 199 to valine 202, and glutamate 207. The ATP-grasp domain occupies arginine 123–leucine 318. Residues glutamate 277 and glutamate 289 each contribute to the Mg(2+) site. Residues aspartate 296, lysine 365, and arginine 372 to arginine 373 contribute to the N(1)-(5-phospho-beta-D-ribosyl)glycinamide site.

Belongs to the PurK/PurT family. In terms of assembly, homodimer.

It catalyses the reaction N(1)-(5-phospho-beta-D-ribosyl)glycinamide + formate + ATP = N(2)-formyl-N(1)-(5-phospho-beta-D-ribosyl)glycinamide + ADP + phosphate + H(+). It functions in the pathway purine metabolism; IMP biosynthesis via de novo pathway; N(2)-formyl-N(1)-(5-phospho-D-ribosyl)glycinamide from N(1)-(5-phospho-D-ribosyl)glycinamide (formate route): step 1/1. Its function is as follows. Involved in the de novo purine biosynthesis. Catalyzes the transfer of formate to 5-phospho-ribosyl-glycinamide (GAR), producing 5-phospho-ribosyl-N-formylglycinamide (FGAR). Formate is provided by PurU via hydrolysis of 10-formyl-tetrahydrofolate. The sequence is that of Formate-dependent phosphoribosylglycinamide formyltransferase from Burkholderia cenocepacia (strain HI2424).